The sequence spans 591 residues: NADH-quinone oxidoreductase subunit C/D (591 aa).

Residues 1–182 (MVTVVENTDP…TPYFLNTAKQ (182 aa)) are NADH dehydrogenase I subunit C. The interval 206 to 591 (DFMFLNIGPN…IDIVMADCDR (386 aa)) is NADH dehydrogenase I subunit D.

It in the N-terminal section; belongs to the complex I 30 kDa subunit family. This sequence in the C-terminal section; belongs to the complex I 49 kDa subunit family. NDH-1 is composed of 13 different subunits. Subunits NuoB, CD, E, F, and G constitute the peripheral sector of the complex.

The protein resides in the cell inner membrane. It carries out the reaction a quinone + NADH + 5 H(+)(in) = a quinol + NAD(+) + 4 H(+)(out). Its function is as follows. NDH-1 shuttles electrons from NADH, via FMN and iron-sulfur (Fe-S) centers, to quinones in the respiratory chain. The immediate electron acceptor for the enzyme in this species is believed to be ubiquinone. Couples the redox reaction to proton translocation (for every two electrons transferred, four hydrogen ions are translocated across the cytoplasmic membrane), and thus conserves the redox energy in a proton gradient. This is NADH-quinone oxidoreductase subunit C/D from Psychrobacter cryohalolentis (strain ATCC BAA-1226 / DSM 17306 / VKM B-2378 / K5).